Consider the following 198-residue polypeptide: MSKVLVLYYSMYGHVETLAQAVAEGARGAGSEVVIKRVPETMPEDVARQAGAKLDQEAPVASLEELADYDAILFGTPTRFGNMAGQMRNFLDQTGSLWFNGQLIGKVGSVFTSTGTGGGNETTITSFWHTLAHHGMVIVGLSYAAPELADLSVVKGGSPYGAGTIAGGDGSRQPNEQELALARYQGRHVAEIAQRLHG.

The 186-residue stretch at 4–189 folds into the Flavodoxin-like domain; that stretch reads VLVLYYSMYG…ALARYQGRHV (186 aa). FMN-binding positions include 10–15 and 78–80; these read SMYGHV and TRF. Residue tyrosine 12 participates in NAD(+) binding. Tryptophan 98 provides a ligand contact to substrate. FMN is bound by residues 113 to 118 and histidine 133; that span reads STGTGG.

This sequence belongs to the WrbA family. FMN is required as a cofactor.

It carries out the reaction a quinone + NADH + H(+) = a quinol + NAD(+). It catalyses the reaction a quinone + NADPH + H(+) = a quinol + NADP(+). This is NAD(P)H dehydrogenase (quinone) from Halorhodospira halophila (strain DSM 244 / SL1) (Ectothiorhodospira halophila (strain DSM 244 / SL1)).